The chain runs to 260 residues: HTH-type transcriptional repressor NanR (260 aa).

Positions 1 to 21 (MSAFDHSSDDTQETIGNSLRR) are disordered. The HTH gntR-type domain maps to 27-95 (KKLSEMVEEE…NGERARVSRP (69 aa)). The H-T-H motif DNA-binding region spans 55 to 74 (ERELMAFFNVGRPSVREALA).

It belongs to the NanR family.

Functionally, transcriptional repressor that controls expression of the genes required for the catabolism of sialic acids. This is HTH-type transcriptional repressor NanR from Klebsiella aerogenes (strain ATCC 13048 / DSM 30053 / CCUG 1429 / JCM 1235 / KCTC 2190 / NBRC 13534 / NCIMB 10102 / NCTC 10006 / CDC 819-56) (Enterobacter aerogenes).